Reading from the N-terminus, the 436-residue chain is GTPase Der (436 aa).

EngA-type G domains lie at 4 to 167 and 175 to 351; these read PTIA…PAQE and IKFS…ESQN. Residues 10–17, 57–61, 119–122, 181–188, 229–233, and 294–297 contribute to the GTP site; these read GRPNVGKS, DTGGI, NKVD, DTAGM, and NKWD. Residues 352–436 form the KH-like domain; it reads TRIPSAVLND…PIHLIARKRK (85 aa).

The protein belongs to the TRAFAC class TrmE-Era-EngA-EngB-Septin-like GTPase superfamily. EngA (Der) GTPase family. Associates with the 50S ribosomal subunit.

GTPase that plays an essential role in the late steps of ribosome biogenesis. This Streptococcus suis (strain 98HAH33) protein is GTPase Der.